Consider the following 134-residue polypeptide: Profilin-3 (134 aa).

A disulfide bridge connects residues Cys-13 and Cys-118. Positions 84–100 (AVIRGKKGSGGITIKKT) match the Involved in PIP2 interaction motif. Phosphothreonine is present on Thr-114.

The protein belongs to the profilin family. Occurs in many kinds of cells as a complex with monomeric actin in a 1:1 ratio. Post-translationally, phosphorylated by MAP kinases.

The protein resides in the cytoplasm. The protein localises to the cytoskeleton. Its function is as follows. Binds to actin and affects the structure of the cytoskeleton. At high concentrations, profilin prevents the polymerization of actin, whereas it enhances it at low concentrations. This Olea europaea (Common olive) protein is Profilin-3.